The sequence spans 561 residues: Dihydroxy-acid dehydratase (561 aa).

Residue cysteine 50 participates in [2Fe-2S] cluster binding. Aspartate 82 contacts Mg(2+). Residue cysteine 123 coordinates [2Fe-2S] cluster. Aspartate 124 and lysine 125 together coordinate Mg(2+). Lysine 125 carries the post-translational modification N6-carboxylysine. Cysteine 195 lines the [2Fe-2S] cluster pocket. Position 447 (glutamate 447) interacts with Mg(2+). Catalysis depends on serine 473, which acts as the Proton acceptor.

Belongs to the IlvD/Edd family. Homodimer. Requires [2Fe-2S] cluster as cofactor. It depends on Mg(2+) as a cofactor.

It carries out the reaction (2R)-2,3-dihydroxy-3-methylbutanoate = 3-methyl-2-oxobutanoate + H2O. The enzyme catalyses (2R,3R)-2,3-dihydroxy-3-methylpentanoate = (S)-3-methyl-2-oxopentanoate + H2O. It participates in amino-acid biosynthesis; L-isoleucine biosynthesis; L-isoleucine from 2-oxobutanoate: step 3/4. The protein operates within amino-acid biosynthesis; L-valine biosynthesis; L-valine from pyruvate: step 3/4. Its function is as follows. Functions in the biosynthesis of branched-chain amino acids. Catalyzes the dehydration of (2R,3R)-2,3-dihydroxy-3-methylpentanoate (2,3-dihydroxy-3-methylvalerate) into 2-oxo-3-methylpentanoate (2-oxo-3-methylvalerate) and of (2R)-2,3-dihydroxy-3-methylbutanoate (2,3-dihydroxyisovalerate) into 2-oxo-3-methylbutanoate (2-oxoisovalerate), the penultimate precursor to L-isoleucine and L-valine, respectively. The protein is Dihydroxy-acid dehydratase of Crocosphaera subtropica (strain ATCC 51142 / BH68) (Cyanothece sp. (strain ATCC 51142)).